Consider the following 424-residue polypeptide: MEKFRVHGPFTLSGTVDISGAKNAALPILFAAVLATEPVTLTNVPDLKDVDTTFKILRKLGVVVERDESGAVQIDASKIDHYVAPYELVKTMRASIWALAPLVARFHEGQVSLPGGCTIGARPVDMHISGLEKMGALIELDEGYVKATSNGRLHGARIYMDKVSVGATLSVMMAATLAEGTTTIENAAREPEIVDTALFLNAMGAKISGAGTDTITIEGVERLTGCQHRIVADRIETGTFLVAAAVSGGKITCRGTKADTLEAVIEKLREAGMEVTVTEDTITLDSKGQRPKAVNIRTMPHPGFPTDMQAQFTLLNVVAEGTSRITETIFENRFMHIPELNRMGAKGEIEGNTAICHGVEKLKSAEVMATDLRASISLVLAGCIASGETIVDRIYHIDRGYEHIEDKLRGIGAKIERFSTKFEE.

Residue K22–N23 participates in phosphoenolpyruvate binding. UDP-N-acetyl-alpha-D-glucosamine is bound at residue R93. C117 functions as the Proton donor in the catalytic mechanism. Residue C117 is modified to 2-(S-cysteinyl)pyruvic acid O-phosphothioketal. Residues K162–V165, D307, and I329 contribute to the UDP-N-acetyl-alpha-D-glucosamine site.

It belongs to the EPSP synthase family. MurA subfamily.

It is found in the cytoplasm. The enzyme catalyses phosphoenolpyruvate + UDP-N-acetyl-alpha-D-glucosamine = UDP-N-acetyl-3-O-(1-carboxyvinyl)-alpha-D-glucosamine + phosphate. It participates in cell wall biogenesis; peptidoglycan biosynthesis. Cell wall formation. Adds enolpyruvyl to UDP-N-acetylglucosamine. The chain is UDP-N-acetylglucosamine 1-carboxyvinyltransferase from Actinobacillus pleuropneumoniae serotype 5b (strain L20).